The following is a 398-amino-acid chain: MAKEKYDRSKPHVNIGTIGHVDHGKTTLTAAITTVLARRLPSSVNQPKDYASIDAAPEERERGITINTAHVEYETATRHYAHIDAPGHADYVKNMITGAAQMDGAILVVASTDGPMPQTREHILLSRQVGVKHLIVFMNKVDLVDDEELLELVEMEIRDLLSEYDFPGDDLPVIQGSALKALEGDSKYEDIIMELMDTVDSYIPEPERDTDKPLLLPVEDVFSITGRGTVASGRIDRGTVRVNDEIEIVGIRDEIKKAVVTGVEMFRKQLDEGLAGDNVGVLLRGVQRDEIERGQVIAKPGSINPHTKFKGEVYILTKEEGGRHTPFFNNYRPQFYFRTTDVTGSIELPAGTEMVMPGDNVTIDVELIHPIAVEQGTTFSIREGGRTVGSGIVSEIEA.

Positions 10 to 207 (KPHVNIGTIG…TVDSYIPEPE (198 aa)) constitute a tr-type G domain. The G1 stretch occupies residues 19–26 (GHVDHGKT). 19–26 (GHVDHGKT) serves as a coordination point for GTP. A Mg(2+)-binding site is contributed by threonine 26. The G2 stretch occupies residues 63–67 (GITIN). The G3 stretch occupies residues 84–87 (DAPG). Residues 84-88 (DAPGH) and 139-142 (NKVD) each bind GTP. The tract at residues 139–142 (NKVD) is G4. The tract at residues 177–179 (SAL) is G5.

This sequence belongs to the TRAFAC class translation factor GTPase superfamily. Classic translation factor GTPase family. EF-Tu/EF-1A subfamily. As to quaternary structure, monomer.

The protein resides in the cytoplasm. The catalysed reaction is GTP + H2O = GDP + phosphate + H(+). In terms of biological role, GTP hydrolase that promotes the GTP-dependent binding of aminoacyl-tRNA to the A-site of ribosomes during protein biosynthesis. The polypeptide is Elongation factor Tu (Streptococcus equi subsp. zooepidemicus (strain MGCS10565)).